Consider the following 72-residue polypeptide: Cell division protein ZapB (72 aa).

Residues 1 to 72 (MSSEILDQLE…RSLLGQIDNV (72 aa)) are a coiled coil.

The protein belongs to the ZapB family. In terms of assembly, homodimer. The ends of the coiled-coil dimer bind to each other, forming polymers. Interacts with FtsZ.

The protein resides in the cytoplasm. Its function is as follows. Non-essential, abundant cell division factor that is required for proper Z-ring formation. It is recruited early to the divisome by direct interaction with FtsZ, stimulating Z-ring assembly and thereby promoting cell division earlier in the cell cycle. Its recruitment to the Z-ring requires functional FtsA or ZipA. In Actinobacillus succinogenes (strain ATCC 55618 / DSM 22257 / CCUG 43843 / 130Z), this protein is Cell division protein ZapB.